A 199-amino-acid polypeptide reads, in one-letter code: MTATWKGRLGMSVAAVKDLTMTIAYDLKASVRTIPDYPKPGILFRDITTLLGDARSFRCAIDELVQPWAGSKIDKVAGIEARGFIIGGAIAHQVSSGFVPIRKKGKLPHTTVSMSYALEYGSDIIEMHVDAIKPGERVILVDDLIATGGTAEGAIKLLRQTGAEIVAACFIIDLPELGGAAKIRDMGVPVRALMEFEGH.

This sequence belongs to the purine/pyrimidine phosphoribosyltransferase family. As to quaternary structure, homodimer.

The protein localises to the cytoplasm. It catalyses the reaction AMP + diphosphate = 5-phospho-alpha-D-ribose 1-diphosphate + adenine. It participates in purine metabolism; AMP biosynthesis via salvage pathway; AMP from adenine: step 1/1. Its function is as follows. Catalyzes a salvage reaction resulting in the formation of AMP, that is energically less costly than de novo synthesis. The sequence is that of Adenine phosphoribosyltransferase from Rhodopseudomonas palustris (strain BisB18).